The sequence spans 188 residues: MTSISNVSKGSIIRFKGEPHIIESLIHRTPGNLRAFYQANMKNLKTGRNVEFRFSASESVDVIVTERKPYQYLYKDGTDFVMMDSGTFDQINVPEITLGTSSRFLKDGITVVIVFSDDGSILDVEMPTFVEVEVTETSPTTKDDRATSGTKPAIVETGAEVGVPMFIQTGSIIRVDTRTGEYIERVKK.

Belongs to the elongation factor P family.

The protein localises to the cytoplasm. It functions in the pathway protein biosynthesis; polypeptide chain elongation. In terms of biological role, involved in peptide bond synthesis. Stimulates efficient translation and peptide-bond synthesis on native or reconstituted 70S ribosomes in vitro. Probably functions indirectly by altering the affinity of the ribosome for aminoacyl-tRNA, thus increasing their reactivity as acceptors for peptidyl transferase. This Chlorobium phaeobacteroides (strain DSM 266 / SMG 266 / 2430) protein is Elongation factor P.